The following is a 194-amino-acid chain: Probable thymidylate kinase (194 aa).

ATP is bound at residue 7-14; that stretch reads GIDGSGKT.

This sequence belongs to the thymidylate kinase family.

The catalysed reaction is dTMP + ATP = dTDP + ADP. The chain is Probable thymidylate kinase (tmk) from Methanothermobacter thermautotrophicus (strain ATCC 29096 / DSM 1053 / JCM 10044 / NBRC 100330 / Delta H) (Methanobacterium thermoautotrophicum).